Consider the following 168-residue polypeptide: Cell division inhibitor SulA (168 aa).

The tract at residues 106 to 112 is ftsZ binding; sequence ALLTGNY. The interval 161-168 is lon protease binding; it reads KIHSSLYH.

Belongs to the SulA family. In terms of assembly, interacts with FtsZ. Is rapidly cleaved and degraded by the Lon protease once DNA damage is repaired.

Functionally, component of the SOS system and an inhibitor of cell division. Accumulation of SulA causes rapid cessation of cell division and the appearance of long, non-septate filaments. In the presence of GTP, binds a polymerization-competent form of FtsZ in a 1:1 ratio, thus inhibiting FtsZ polymerization and therefore preventing it from participating in the assembly of the Z ring. This mechanism prevents the premature segregation of damaged DNA to daughter cells during cell division. This chain is Cell division inhibitor SulA, found in Yersinia enterocolitica serotype O:8 / biotype 1B (strain NCTC 13174 / 8081).